Reading from the N-terminus, the 152-residue chain is 3-dehydroquinate dehydratase (152 aa).

Residue tyrosine 23 is the Proton acceptor of the active site. Positions 75, 81, and 88 each coordinate substrate. Histidine 101 functions as the Proton donor in the catalytic mechanism. Residues 102–103 (IS) and arginine 112 each bind substrate.

The protein belongs to the type-II 3-dehydroquinase family. As to quaternary structure, homododecamer.

The catalysed reaction is 3-dehydroquinate = 3-dehydroshikimate + H2O. The protein operates within metabolic intermediate biosynthesis; chorismate biosynthesis; chorismate from D-erythrose 4-phosphate and phosphoenolpyruvate: step 3/7. In terms of biological role, catalyzes a trans-dehydration via an enolate intermediate. This Alkalilimnicola ehrlichii (strain ATCC BAA-1101 / DSM 17681 / MLHE-1) protein is 3-dehydroquinate dehydratase.